A 782-amino-acid polypeptide reads, in one-letter code: Shutoff protein (782 aa).

A binding to host EIF4G region spans residues 262–329 (VMNQLLIKRA…AVLVTVELEC (68 aa)). The 119-residue stretch at 332–450 (RFFSDITTLR…SLWTGFDERT (119 aa)) folds into the RRM domain. Phosphotyrosine; by host occurs at positions 349 and 665. The tract at residues 715–760 (GGRILGESGRGRGRGLGRMGGGGGGQPRRGSRGGGGRFQGRSDRRQ) is disordered. Residues 728 to 752 (RGLGRMGGGGGGQPRRGSRGGGGRF) show a composition bias toward gly residues.

The protein belongs to the adenoviridae shutoff protein family. In terms of assembly, monomer. Interacts with hexon protein; this interaction allows chaperoning and trimerization of hexon proteins. Interacts (via N-terminus) with host initiation factor EIF4G (via C-terminus). Interacts (via RRM domain) with viral mRNAs that contain the tripartite leader; this interaction allows ribosome shunting and expression of viral late mRNAs. Post-translationally, might be cleaved by the viral protease. In terms of processing, phosphorylated. Tyrosine phosphorylation enhances preferential binding to tripartite leader mRNAs and allows ribosome shunting. Methylated. Asymmetric dimethylation by host PRMT1 of the Arg/Gly-rich region may regulate shutoff protein binding to hexon and promote the capsid assembly in the nucleus.

It is found in the host cytoplasm. In terms of biological role, protein that inhibits host translation while promoting late viral translation by ribosome shunting. Blocks host cap-dependent translation by binding to eIF4G, displacing MKNK1 from cap initiation complexes and preventing EIF4E phosphorylation. Binds to the tripartite leader sequence of viral late mRNAs and recruits host eIF4G, PABPC1/poly-A binding protein and 40S ribosomes subunits on viral mRNAs, allowing ribosome shunting and efficient translation of late viral mRNAs even though conventional translation via ribosome scanning from the cap has been shut off in the host cell. During assembly, acts as a chaperone protein that helps hexon proteins assembly into trimers. This Human adenovirus A serotype 12 (HAdV-12) protein is Shutoff protein.